A 216-amino-acid polypeptide reads, in one-letter code: Ribonuclease HII (216 aa).

Positions 28–216 (DIVCGVDEAG…PVRAALDLIR (189 aa)) constitute an RNase H type-2 domain. The a divalent metal cation site is built by Asp-34, Glu-35, and Asp-126.

It belongs to the RNase HII family. Mn(2+) serves as cofactor. The cofactor is Mg(2+).

It is found in the cytoplasm. The catalysed reaction is Endonucleolytic cleavage to 5'-phosphomonoester.. Functionally, endonuclease that specifically degrades the RNA of RNA-DNA hybrids. The protein is Ribonuclease HII of Burkholderia vietnamiensis (strain G4 / LMG 22486) (Burkholderia cepacia (strain R1808)).